The primary structure comprises 64 residues: MTGVRVKDGESFENAMKRFKKQCEKAGILSEIRKREHYEKPSVKRKKKALAAKKRALKKMRKGF.

The protein belongs to the bacterial ribosomal protein bS21 family.

The chain is Small ribosomal subunit protein bS21 from Anaeromyxobacter dehalogenans (strain 2CP-1 / ATCC BAA-258).